The primary structure comprises 98 residues: Hainantoxin-XVII.2 (98 aa).

A signal peptide spans 1 to 40 (MTTVGVSLFRRSPEKITMKIAAFLGLSFLLIASYVLICEA). Residues 41–64 (QHPGFQELLILEENMRDPENSKER) constitute a propeptide that is removed on maturation. Intrachain disulfides connect cysteine 66–cysteine 81, cysteine 73–cysteine 85, and cysteine 80–cysteine 95.

It belongs to the hainantoxin family. 17 subfamily. In terms of tissue distribution, expressed by the venom gland.

The protein localises to the secreted. In terms of biological role, putative ion channel inhibitor. The sequence is that of Hainantoxin-XVII.2 from Cyriopagopus hainanus (Chinese bird spider).